We begin with the raw amino-acid sequence, 437 residues long: MLYILKCKSNYIINFHRLPQKTSKALYTNISLSFIYRFMWGIMMKKLLIILIGFILLSSISAIQIDAPQYQPNVIHPGDDVDLWIKINNDNYDNEVKNIVVEVTPHYPFELRQVNPIKGKATISHLNPGESDTVYFKLHVDENAPSRDYRIDVKVSYDEVDKEDGKETSHHYEITKIYYLHVYGIASFEINIDDTSIIPGKTKTIKLDIKNVGTGNAKYLNLYLIGNDKINILGGSLIFVGCLKANNQYIIPIKIYAVPEIEDGIYSINANLFWVGEDGKQYNSTIPLNIRVVKKIYANQPYIYLDDVKNKGDYIEITIGIANRGTTKIKHCVMTLTANGRNYTKYIGDLDEDDYDTSIFEIKEFGDIPIKVTVTYFDDYHNPYNATETFNIHVEKVKKEESLSPMYIIGGVIVVIIIILYIRKRKRHQEFEEFEEI.

The chain crosses the membrane as a helical span at residues 47 to 67 (LLIILIGFILLSSISAIQIDA).

The protein resides in the membrane. This is an uncharacterized protein from Methanocaldococcus jannaschii (strain ATCC 43067 / DSM 2661 / JAL-1 / JCM 10045 / NBRC 100440) (Methanococcus jannaschii).